Consider the following 355-residue polypeptide: 5-formaminoimidazole-4-carboxamide-1-(beta)-D-ribofuranosyl 5'-monophosphate synthetase (355 aa).

5-amino-1-(5-phospho-beta-D-ribosyl)imidazole-4-carboxamide is bound by residues His-27 and Ser-94. The 232-residue stretch at 101 to 332 folds into the ATP-grasp domain; it reads TESFAELAVP…YSDMIEENLS (232 aa). ATP is bound by residues 144–195 and Glu-225; that span reads PEKI…TRYY. Asn-254 contributes to the 5-amino-1-(5-phospho-beta-D-ribosyl)imidazole-4-carboxamide binding site. Glu-292 and Glu-305 together coordinate Mg(2+).

Belongs to the phosphohexose mutase family. Mg(2+) serves as cofactor. Requires Mn(2+) as cofactor.

It catalyses the reaction 5-amino-1-(5-phospho-beta-D-ribosyl)imidazole-4-carboxamide + formate + ATP = 5-formamido-1-(5-phospho-D-ribosyl)imidazole-4-carboxamide + ADP + phosphate. The protein operates within purine metabolism; IMP biosynthesis via de novo pathway; 5-formamido-1-(5-phospho-D-ribosyl)imidazole-4-carboxamide from 5-amino-1-(5-phospho-D-ribosyl)imidazole-4-carboxamide (formate route): step 1/1. Functionally, catalyzes the ATP- and formate-dependent formylation of 5-aminoimidazole-4-carboxamide-1-beta-d-ribofuranosyl 5'-monophosphate (AICAR) to 5-formaminoimidazole-4-carboxamide-1-beta-d-ribofuranosyl 5'-monophosphate (FAICAR) in the absence of folates. The chain is 5-formaminoimidazole-4-carboxamide-1-(beta)-D-ribofuranosyl 5'-monophosphate synthetase from Methanococcoides burtonii (strain DSM 6242 / NBRC 107633 / OCM 468 / ACE-M).